The sequence spans 235 residues: Orotidine 5'-phosphate decarboxylase (235 aa).

Substrate is bound by residues D10, K33, 60 to 69, T123, R185, Q194, G214, and R215; that span reads DLKMNDIPNT. The Proton donor role is filled by K62.

This sequence belongs to the OMP decarboxylase family. Type 1 subfamily. As to quaternary structure, homodimer.

It catalyses the reaction orotidine 5'-phosphate + H(+) = UMP + CO2. It functions in the pathway pyrimidine metabolism; UMP biosynthesis via de novo pathway; UMP from orotate: step 2/2. Catalyzes the decarboxylation of orotidine 5'-monophosphate (OMP) to uridine 5'-monophosphate (UMP). The chain is Orotidine 5'-phosphate decarboxylase from Lactobacillus johnsonii (strain CNCM I-12250 / La1 / NCC 533).